Consider the following 451-residue polypeptide: Phosphoglucosamine mutase (451 aa).

Serine 102 (phosphoserine intermediate) is an active-site residue. Positions 102, 242, 244, and 246 each coordinate Mg(2+). Serine 102 carries the post-translational modification Phosphoserine.

The protein belongs to the phosphohexose mutase family. It depends on Mg(2+) as a cofactor. Post-translationally, activated by phosphorylation.

The catalysed reaction is alpha-D-glucosamine 1-phosphate = D-glucosamine 6-phosphate. Catalyzes the conversion of glucosamine-6-phosphate to glucosamine-1-phosphate. The polypeptide is Phosphoglucosamine mutase (Staphylococcus aureus (strain USA300)).